Here is a 908-residue protein sequence, read N- to C-terminus: MKKRRKVTSNLDEKIHLGYHKDSSEENAAVECGQVTYTQAPERPTPEAAQRCQELPPSPDQRKLLSSLQYNKNLLKYLNDDRQKQPSFCDLLIIVEGKEFSAHKVVVAVGSSYFHACLSKNPSTDVVTLDHVTHSVFQHLLEFLYTSEFFVYKYEIPLVLEAAKFLDIIDAVKLLNNENVAAFQAELTEKSSPEETLNELTGRLSSSHQCKFCSRHFCYKKSLENHLAKTHRSLLLGKKHGLKMLERSFSTRRSKRNRKCPVKFEDTSDDEQESGDGSDNLHQESSEKERSDRNDSEDPGSEYNAEDEELEEEVSDEDSDTEQSDKDNDAEEEPEAGDSAGSIHEGLAPVIIQNSNKKILQCPKCDKTFDRIGKYESHTRVHTGEKPFECDICHQRYSTKSNLTVHRKKHSNEVEFHRKEHKCPYCNKLHASKKTLAKHVKRFHPENAQEFISIKKTKSESWKCDICKKSFTRRPHLEEHMILHSQDKPFKCTYCEEHFKSRFARLKHQEKFHLGPFPCDICGRQFNDTGNLKRHIECTHGGKRKWTCFICGKSVRERTTLKEHLRIHSGEKPHLCSICGQSFRHGSSYRLHLRVHHDDKRYECDECGKTFIRHDHLTKHKKIHSGEKAHQCEECGKCFGRRDHLTVHYKSVHLGEKVWQKYKATFHQCDVCKKIFKGKSSLEMHFRTHSGEKPYKCQICNQSFRIKKTLTKHLVIHSDARPFNCQHCNATFKRKDKLKYHIDHVHGIKSPDDSLSTSEEKLMSLPMEYSSDDKIFQAETKQYLDQPKVYQSEAKTMLQNVSAEVCVPVTLVPVQMPDTSSDLVPHTTTLPTSSHEMLPPQPQSTDYPRAADLAFLEKYTLTPQPANIVHPVRPEQMLDPREPSYLGTLLGLDSTAAVQNMCSSEHRS.

Residues 38–59 (TQAPERPTPEAAQRCQELPPSP) are disordered. Residues 89–153 (CDLLIIVEGK…LYTSEFFVYK (65 aa)) enclose the BTB domain. The C2H2-type 1 zinc finger occupies 208–231 (HQCKFCSRHFCYKKSLENHLAKTH). The span at 252–261 (RRSKRNRKCP) shows a compositional bias: basic residues. The tract at residues 252–344 (RRSKRNRKCP…EAGDSAGSIH (93 aa)) is disordered. A compositionally biased stretch (acidic residues) spans 267–276 (TSDDEQESGD). The segment covering 279–296 (DNLHQESSEKERSDRNDS) has biased composition (basic and acidic residues). A compositionally biased stretch (acidic residues) spans 297-336 (EDPGSEYNAEDEELEEEVSDEDSDTEQSDKDNDAEEEPEA). 13 consecutive C2H2-type zinc fingers follow at residues 360–382 (LQCPKCDKTFDRIGKYESHTRVH), 388–410 (FECDICHQRYSTKSNLTVHRKKH), 421–444 (HKCPYCNKLHASKKTLAKHVKRFH), 462–484 (WKCDICKKSFTRRPHLEEHMILH), 490–513 (FKCTYCEEHFKSRFARLKHQEKFH), 517–540 (FPCDICGRQFNDTGNLKRHIECTH), 546–568 (WTCFICGKSVRERTTLKEHLRIH), 574–596 (HLCSICGQSFRHGSSYRLHLRVH), 602–624 (YECDECGKTFIRHDHLTKHKKIH), 630–653 (HQCEECGKCFGRRDHLTVHYKSVH), 667–689 (HQCDVCKKIFKGKSSLEMHFRTH), 695–717 (YKCQICNQSFRIKKTLTKHLVIH), and 723–746 (FNCQHCNATFKRKDKLKYHIDHVH).

Its subcellular location is the nucleus. May be involved in transcriptional regulation. This Mus musculus (Mouse) protein is Zinc finger and BTB domain-containing protein 41 (Zbtb41).